The sequence spans 452 residues: Probable ECA polymerase (452 aa).

11 helical membrane-spanning segments follow: residues 6–26 (FSGLLVVWLLSTLFIATLTWF), 37–57 (VFFSLLFLLTFFFGFPLTSVL), 63–83 (VGVAPPEILLQALLSAACFYG), 118–138 (VILMGIALVSVGIFFMHNGFL), 155–175 (GVALKRFFYFFIPAMLVVYFL), 181–201 (AWLFFLVSTVAFGLLTYMIVG), 207–227 (IIIAFAIFLFIGIIRGWISLW), 228–248 (MLAAAGVLGIVGMFWLALKRY), 341–361 (LVVMGGALFIPLGAIVVGLII), 378–398 (YKAAILHSFCFGAIFNMIVLA), and 410–430 (VFFLVVFGASLLVAKLLFWLF).

It belongs to the WzyE family. In terms of assembly, probably part of a complex composed of WzxE, WzyE and WzzE.

The protein localises to the cell inner membrane. It participates in bacterial outer membrane biogenesis; enterobacterial common antigen biosynthesis. Probably involved in the polymerization of enterobacterial common antigen (ECA) trisaccharide repeat units. In Salmonella arizonae (strain ATCC BAA-731 / CDC346-86 / RSK2980), this protein is Probable ECA polymerase.